The following is a 381-amino-acid chain: MTHASNSHPVTELTKELIARPSVTPLDEGCQTLMAERLAAIGFNIEPMVFEDTTNMWARRGNEGPVFCFAGHTDVVPAGDLSRWHTPPFEPTIIDGYLYGRGAADMKGSLAAMIVATERFVAKHPNHPGSIAFLITSDEEGPFINGTTRVIDTLEARNEKITWALVGEPSSTLKLGDVVKNGRRGSLTANLTVKGIQGHVAYPHLADNPIHKAAPFLAELSQTHWDNGNEFFPPTSMQIANINGGTGASNVIPGTLEVMFNFRYSTEVTAEILIERVEALLTAHELDYDISWTFNGLPFLTGEGPLLDATRHAIRQITGYDTDPQTTGGTSDGRFIAPTGAKVLELGPVNATIHKVNECVKIDDLEQLALCYEVILEQLLC.

Residue His72 coordinates Zn(2+). The active site involves Asp74. Residue Asp105 participates in Zn(2+) binding. Residue Glu139 is the Proton acceptor of the active site. Zn(2+) contacts are provided by Glu140, Glu168, and His354.

The protein belongs to the peptidase M20A family. DapE subfamily. Homodimer. Requires Zn(2+) as cofactor. Co(2+) serves as cofactor.

It catalyses the reaction N-succinyl-(2S,6S)-2,6-diaminopimelate + H2O = (2S,6S)-2,6-diaminopimelate + succinate. It participates in amino-acid biosynthesis; L-lysine biosynthesis via DAP pathway; LL-2,6-diaminopimelate from (S)-tetrahydrodipicolinate (succinylase route): step 3/3. In terms of biological role, catalyzes the hydrolysis of N-succinyl-L,L-diaminopimelic acid (SDAP), forming succinate and LL-2,6-diaminopimelate (DAP), an intermediate involved in the bacterial biosynthesis of lysine and meso-diaminopimelic acid, an essential component of bacterial cell walls. The chain is Succinyl-diaminopimelate desuccinylase from Shewanella sp. (strain MR-4).